Here is a 217-residue protein sequence, read N- to C-terminus: MFITFEGIEGTGKTTQIKKLTAFLEESGHNVDVTLEPGGSRIGKELRKILLNMDSTDITGECELFLYLADRAQHVGQVIKPAVEAGKIIISDRFADSTIVYQGYGRGLDPKLLRELNDVAVSGNWPDLTILLDIDPEIGLKRAMTRNLQENKMQEEGRFEAESLEFHNRVREGYLTWAALNNDRIVVVNADQTPDEIFKEIKAKVVERIKGDFVTNG.

7–14 lines the ATP pocket; sequence GIEGTGKT.

It belongs to the thymidylate kinase family.

The catalysed reaction is dTMP + ATP = dTDP + ADP. In terms of biological role, phosphorylation of dTMP to form dTDP in both de novo and salvage pathways of dTTP synthesis. The protein is Thymidylate kinase of Maridesulfovibrio salexigens (strain ATCC 14822 / DSM 2638 / NCIMB 8403 / VKM B-1763) (Desulfovibrio salexigens).